The primary structure comprises 483 residues: Teichuronic acid biosynthesis protein TuaB (483 aa).

11 helical membrane passes run 15-34, 41-63, 83-105, 112-134, 154-176, 294-316, 321-343, 356-378, 382-404, 411-433, and 448-470; these read TSIS…ALLG, EFGL…DMGF, WLNI…VIAG, LVFL…QYQY, VLSF…YVIS, LALV…ITAV, WLAA…LMNP, LAFY…AVQT, LTVA…WLLA, LSAY…IIAF, and MRLA…KAYP.

It belongs to the polysaccharide synthase family.

The protein localises to the cell membrane. The protein operates within cell wall biogenesis; teichuronic acid biosynthesis. Its function is as follows. Might be involved in the translocation of teichuronic acid repeating units from the inner to the outer surface of the membrane. In Bacillus subtilis (strain 168), this protein is Teichuronic acid biosynthesis protein TuaB (tuaB).